The chain runs to 557 residues: MESERSKRMGNACIPLKRIAYFLCLLSALLLTEGKKPAKPKCPAVCTCTKDNALCENARSIPRTVPPDVISLSFVRSGFTEISEGGFLFTPSLQLLLFTSNSFDVISDDAFIGLPHLEYLFIENNNIKSISRHTFRGLKSLIHLSLANNNLQTLPKDIFKGLDSLTNVDLRGNSFNCDCKLKWLVEWLGHTNATVEDIYCEGPPEYKKRKINSLSSKDFDCIITEFAKSQDLPYQSLSIDTFSYLNDEYVVIAQPFTGKCIFLEWDHVEKTFRNYDNITGTSTVVCKPIVIETQLYVIVAQLFGGSHIYKRDSFANKFIKIQDIEILKIRKPNDIETFKIENNWYFVVADSSKAGFTTIYKWNGNGFYSHQSLHAWYRDTDVEYLEIVRTPQTLRTPHLILSSSSQRPVIYQWNKATQLFTNQTDIPNMEDVYAVKHFSVKGDVYICLTRFIGDSKVMKWGGSSFQDIQRMPSRGSMVFQPLQINNYQYAILGSDYSFTQVYNWDAEKAKFVKFQELNVQAPRSFTHVSINKRNFLFASSFKGNTQICKHVIVDLSA.

A signal peptide spans 1 to 34; it reads MESERSKRMGNACIPLKRIAYFLCLLSALLLTEG. Residues 35 to 72 form the LRRNT domain; it reads KKPAKPKCPAVCTCTKDNALCENARSIPRTVPPDVISL. LRR repeat units lie at residues 92-113, 116-137, and 140-161; these read SLQLLLFTSNSFDVISDDAFIG, HLEYLFIENNNIKSISRHTFRG, and SLIHLSLANNNLQTLPKDIFKG. Positions 173 to 223 constitute an LRRCT domain; that stretch reads NSFNCDCKLKWLVEWLGHTNATVEDIYCEGPPEYKKRKINSLSSKDFDCII. N-linked (GlcNAc...) asparagine glycosylation occurs at asparagine 192. EAR repeat units follow at residues 225-267, 271-313, 317-364, 366-415, 419-462, 464-506, and 510-552; these read EFAK…EWDH, TFRN…KRDS, KFIK…KWNG, GFYS…QWNK, LFTN…KWGG, SFQD…NWDA, and KFVK…KHVI. An N-linked (GlcNAc...) asparagine glycan is attached at asparagine 277. The N-linked (GlcNAc...) asparagine glycan is linked to asparagine 422.

As to quaternary structure, oligomer. Interacts with KCNA1 within a complex containing KCNA1, KCNA4 and KCNAB1. Part of a complex containing ADAM22, DLG4/PSD95 and CACNG2 (stargazin). Can bind to ADAM11 and ADAM23. Post-translationally, glycosylated.

Its subcellular location is the secreted. It localises to the synapse. It is found in the cytoplasm. In terms of biological role, regulates voltage-gated potassium channels assembled from KCNA1, KCNA4 and KCNAB1. It slows down channel inactivation by precluding channel closure mediated by the KCNAB1 subunit. Ligand for ADAM22 that positively regulates synaptic transmission mediated by AMPA-type glutamate receptors. Plays a role in suppressing the production of MMP1/3 through the phosphatidylinositol 3-kinase/ERK pathway. This chain is Leucine-rich glioma-inactivated protein 1 (LGI1), found in Pongo abelii (Sumatran orangutan).